We begin with the raw amino-acid sequence, 787 residues long: Penicillin-binding protein 1A (787 aa).

The Cytoplasmic segment spans residues 1–6; that stretch reads MYKSLF. A helical; Signal-anchor for type II membrane protein membrane pass occupies residues 7–27; that stretch reads LCLKIFAVLILIGCSVTAYII. The Periplasmic portion of the chain corresponds to 28 to 787; sequence YHYSHDLPDY…GMLDQSQEIY (760 aa). The transglycosylase stretch occupies residues 49–220; sequence TRIYSRDGKL…SELNPDKNYS (172 aa). Glu-87 functions as the Proton donor; for transglycosylase activity in the catalytic mechanism. A transpeptidase region spans residues 398-711; it reads DVIVVEPIKD…SNVVLPIFID (314 aa). The active-site Acyl-ester intermediate; for transpeptidase activity is the Ser-457.

It in the N-terminal section; belongs to the glycosyltransferase 51 family. In the C-terminal section; belongs to the transpeptidase family.

It is found in the cell inner membrane. The catalysed reaction is [GlcNAc-(1-&gt;4)-Mur2Ac(oyl-L-Ala-gamma-D-Glu-L-Lys-D-Ala-D-Ala)](n)-di-trans,octa-cis-undecaprenyl diphosphate + beta-D-GlcNAc-(1-&gt;4)-Mur2Ac(oyl-L-Ala-gamma-D-Glu-L-Lys-D-Ala-D-Ala)-di-trans,octa-cis-undecaprenyl diphosphate = [GlcNAc-(1-&gt;4)-Mur2Ac(oyl-L-Ala-gamma-D-Glu-L-Lys-D-Ala-D-Ala)](n+1)-di-trans,octa-cis-undecaprenyl diphosphate + di-trans,octa-cis-undecaprenyl diphosphate + H(+). It carries out the reaction Preferential cleavage: (Ac)2-L-Lys-D-Ala-|-D-Ala. Also transpeptidation of peptidyl-alanyl moieties that are N-acyl substituents of D-alanine.. The protein operates within cell wall biogenesis; peptidoglycan biosynthesis. Its function is as follows. Cell wall formation. Synthesis of cross-linked peptidoglycan from the lipid intermediates. The enzyme has a penicillin-insensitive transglycosylase N-terminal domain (formation of linear glycan strands) and a penicillin-sensitive transpeptidase C-terminal domain (cross-linking of the peptide subunits). This chain is Penicillin-binding protein 1A (mrcA), found in Rickettsia prowazekii (strain Madrid E).